A 304-amino-acid chain; its full sequence is UTP--glucose-1-phosphate uridylyltransferase 1 (304 aa).

It belongs to the UDPGP type 2 family.

The enzyme catalyses alpha-D-glucose 1-phosphate + UTP + H(+) = UDP-alpha-D-glucose + diphosphate. It participates in carbohydrate metabolism; nucleotide-sugar metabolism. The protein is UTP--glucose-1-phosphate uridylyltransferase 1 (hasC1) of Streptococcus pyogenes serotype M18 (strain MGAS8232).